A 668-amino-acid polypeptide reads, in one-letter code: DNA mismatch repair protein MutL (668 aa).

This sequence belongs to the DNA mismatch repair MutL/HexB family.

This protein is involved in the repair of mismatches in DNA. It is required for dam-dependent methyl-directed DNA mismatch repair. May act as a 'molecular matchmaker', a protein that promotes the formation of a stable complex between two or more DNA-binding proteins in an ATP-dependent manner without itself being part of a final effector complex. This chain is DNA mismatch repair protein MutL, found in Limosilactobacillus reuteri (strain DSM 20016) (Lactobacillus reuteri).